The chain runs to 130 residues: Holo-[acyl-carrier-protein] synthase (130 aa).

Mg(2+)-binding residues include Asp-9 and Glu-58.

Belongs to the P-Pant transferase superfamily. AcpS family. Requires Mg(2+) as cofactor.

Its subcellular location is the cytoplasm. It carries out the reaction apo-[ACP] + CoA = holo-[ACP] + adenosine 3',5'-bisphosphate + H(+). Transfers the 4'-phosphopantetheine moiety from coenzyme A to a Ser of acyl-carrier-protein. In Mycolicibacterium paratuberculosis (strain ATCC BAA-968 / K-10) (Mycobacterium paratuberculosis), this protein is Holo-[acyl-carrier-protein] synthase.